The primary structure comprises 969 residues: Protein translocase subunit SecA (969 aa).

Residues Q99, 117–121, and D631 contribute to the ATP site; that span reads GEGKT.

The protein belongs to the SecA family. Monomer and homodimer. Part of the essential Sec protein translocation apparatus which comprises SecA, SecYEG and auxiliary proteins SecDF. Other proteins may also be involved.

It is found in the cell inner membrane. Its subcellular location is the cytoplasm. It catalyses the reaction ATP + H2O + cellular proteinSide 1 = ADP + phosphate + cellular proteinSide 2.. In terms of biological role, part of the Sec protein translocase complex. Interacts with the SecYEG preprotein conducting channel. Has a central role in coupling the hydrolysis of ATP to the transfer of proteins into and across the cell membrane, serving as an ATP-driven molecular motor driving the stepwise translocation of polypeptide chains across the membrane. This is Protein translocase subunit SecA from Chlamydia trachomatis serovar A (strain ATCC VR-571B / DSM 19440 / HAR-13).